Consider the following 1958-residue polypeptide: Echinoderm microtubule-associated protein-like 6 (1958 aa).

WD repeat units follow at residues 59–100, 104–145, 148–187, 195–233, 235–273, 280–321, 323–362, 364–403, 406–445, and 561–601; these read GHND…TVSI, VHTH…LLAS, GHSD…LTAK, GDLQ…RTIQ, AHSA…TKID, GYKG…LILQ, HCEG…LIAR, NMEE…EVVH, DRKE…KKIG, and GHSA…VSNG. The disordered stretch occupies residues 604 to 627; that stretch reads ETTPQEGGADSYSEESDSDFSDVP. Residues 615 to 627 show a composition bias toward acidic residues; sequence YSEESDSDFSDVP. 10 WD repeats span residues 725 to 766, 770 to 811, 814 to 853, 861 to 900, 901 to 940, 996 to 1035, 1038 to 1077, 1080 to 1120, 1191 to 1230, and 1236 to 1276; these read GHDD…CLSL, HHQR…KIAT, GHKD…FTSK, GKLE…KTVK, AHDG…KTYA, HMEG…RMLA, KLKK…DMLS, HRKE…RVGI, SDVT…QHAR, and GHSA…TQES. Residues 1322–1337 show a composition bias toward basic and acidic residues; the sequence is KPHQQLKEVSMEERPP. Positions 1322 to 1352 are disordered; that stretch reads KPHQQLKEVSMEERPPVSRAAPQPEKLQKNN. 10 WD repeats span residues 1412–1456, 1460–1501, 1504–1543, 1553–1591, 1593–1638, 1685–1724, 1726–1767, 1768–1807, 1880–1919, and 1925–1958; these read EHTD…TLSM, FHTK…KVAS, GHLE…LLYK, AKMQ…RLVA, AHTG…CRAF, HMEG…LLNK, NLGH…GKKR, DRKS…SLNR, ADKA…KFAK, and GHSA…WRCL.

It belongs to the WD repeat EMAP family.

It is found in the cytoplasm. The protein resides in the cytoskeleton. In terms of biological role, may modify the assembly dynamics of microtubules, such that microtubules are slightly longer, but more dynamic. This is Echinoderm microtubule-associated protein-like 6 (Eml6) from Mus musculus (Mouse).